The following is a 708-amino-acid chain: WD repeat-containing and planar cell polarity effector protein fritz homolog (708 aa).

2 WD repeats span residues 303–342 (PLRSRVISCAVNTSEDKLVLGCEDSSLILYESDCKVTLLA) and 343–382 (QADLLPDLIRWHPNGTIFVVASSQGELQIFDMALSPIRAQ).

It belongs to the WD repeat fritz family. In terms of assembly, interacts with sept2-a. Interacts with intu and fuz; fuz, intu and wdpcp probably form the core CPLANE (ciliogenesis and planar polarity effectors) complex.

The protein localises to the cell membrane. It localises to the cytoplasm. The protein resides in the cytoskeleton. Its subcellular location is the cilium axoneme. It is found in the cilium basal body. In terms of biological role, probable effector of the planar cell polarity signaling pathway which regulates the septin cytoskeleton in both ciliogenesis and collective cell movements including covergent extension during gastrulation. Controls cell shape but not polarization during convergent extension. Proposed to function as core component of the CPLANE (ciliogenesis and planar polarity effectors) complex involved in the recruitment of peripheral IFT-A proteins to basal bodies. In Xenopus laevis (African clawed frog), this protein is WD repeat-containing and planar cell polarity effector protein fritz homolog (wdpcp).